The sequence spans 203 residues: GTP cyclohydrolase-2 (203 aa).

Position 49 to 53 (49 to 53 (RIHSE)) interacts with GTP. Zn(2+) is bound by residues cysteine 54, cysteine 65, and cysteine 67. GTP is bound by residues glutamine 70, 92–94 (EGR), and threonine 114. Aspartate 126 functions as the Proton acceptor in the catalytic mechanism. Residue arginine 128 is the Nucleophile of the active site. The GTP site is built by threonine 149 and lysine 154.

It belongs to the GTP cyclohydrolase II family. The cofactor is Zn(2+).

The enzyme catalyses GTP + 4 H2O = 2,5-diamino-6-hydroxy-4-(5-phosphoribosylamino)-pyrimidine + formate + 2 phosphate + 3 H(+). It participates in cofactor biosynthesis; riboflavin biosynthesis; 5-amino-6-(D-ribitylamino)uracil from GTP: step 1/4. Its function is as follows. Catalyzes the conversion of GTP to 2,5-diamino-6-ribosylamino-4(3H)-pyrimidinone 5'-phosphate (DARP), formate and pyrophosphate. The chain is GTP cyclohydrolase-2 from Shewanella sp. (strain MR-7).